The primary structure comprises 286 residues: tRNA (guanine-N(7)-)-methyltransferase (286 aa).

2 positions are modified to phosphoserine: S7 and S59. Residues G103, 126 to 127 (EI), 161 to 162 (NA), and C181 contribute to the S-adenosyl-L-methionine site. The active site involves D184. 259-261 (TEE) provides a ligand contact to S-adenosyl-L-methionine.

Belongs to the class I-like SAM-binding methyltransferase superfamily. TrmB family. As to quaternary structure, forms a complex with TRM82.

The protein localises to the nucleus. The catalysed reaction is guanosine(46) in tRNA + S-adenosyl-L-methionine = N(7)-methylguanosine(46) in tRNA + S-adenosyl-L-homocysteine. Its pathway is tRNA modification; N(7)-methylguanine-tRNA biosynthesis. Its function is as follows. Methyltransferase that catalyzes the formation of N(7)-methylguanine at position 46 (m7G46) in tRNA, a modification required to maintain stability of tRNAs; its absence resulting in tRNA decay. Both the D-stem and T-stem structures of tRNAs are required for efficient methyltransferase activity. The chain is tRNA (guanine-N(7)-)-methyltransferase from Saccharomyces cerevisiae (strain YJM789) (Baker's yeast).